Reading from the N-terminus, the 466-residue chain is UDP-N-acetylglucosamine--dolichyl-phosphate N-acetylglucosaminephosphotransferase (466 aa).

A helical membrane pass occupies residues Ala-12 to Val-32. Residue Asp-57 participates in UDP-N-acetyl-alpha-D-glucosamine binding. Asn-59 is a glycosylation site (N-linked (GlcNAc...) asparagine). Glu-90 serves as a coordination point for UDP-N-acetyl-alpha-D-glucosamine. The next 2 membrane-spanning stretches (helical) occupy residues Ser-91 to Leu-111 and Pro-124 to Val-144. Lys-155 contacts dolichyl phosphate. 2 helical membrane-spanning segments follow: residues Ile-156–Val-176 and Gly-236–Phe-256. Ile-255–Ile-263 is a binding site for dolichyl phosphate. Asn-262 lines the Mg(2+) pocket. Helical transmembrane passes span Ile-263–Val-283, Asp-316–Trp-336, Val-345–Thr-365, and Leu-374–Val-394. A UDP-N-acetyl-alpha-D-glucosamine-binding site is contributed by Asn-268. Residue Asp-349 coordinates Mg(2+). Arg-398–Arg-400 is a binding site for UDP-N-acetyl-alpha-D-glucosamine. Asn-416 is a glycosylation site (N-linked (GlcNAc...) asparagine). Residues Cys-442–Tyr-462 traverse the membrane as a helical segment.

The protein belongs to the glycosyltransferase 4 family. Requires Mg(2+) as cofactor.

The protein localises to the endoplasmic reticulum membrane. The catalysed reaction is a di-trans,poly-cis-dolichyl phosphate + UDP-N-acetyl-alpha-D-glucosamine = an N-acetyl-alpha-D-glucosaminyl-diphospho-di-trans,poly-cis-dolichol + UMP. The protein operates within protein modification; protein glycosylation. With respect to regulation, inhibited by natural nucleoside antibiotic tunicamycin, which acts as a structural analog and competitor of UDP-GlcNAc. Its function is as follows. UDP-N-acetylglucosamine--dolichyl-phosphate N-acetylglucosaminephosphotransferase that operates in the biosynthetic pathway of dolichol-linked oligosaccharides, the glycan precursors employed in protein asparagine (N)-glycosylation. The assembly of dolichol-linked oligosaccharides begins on the cytosolic side of the endoplasmic reticulum membrane and finishes in its lumen. The sequential addition of sugars to dolichol pyrophosphate produces dolichol-linked oligosaccharides containing fourteen sugars, including two GlcNAcs, nine mannoses and three glucoses. Once assembled, the oligosaccharide is transferred from the lipid to nascent proteins by oligosaccharyltransferases. Catalyzes the initial step of dolichol-linked oligosaccharide biosynthesis, transfering GlcNAc-1-P from cytosolic UDP-GlcNAc onto the carrier lipid dolichyl phosphate (P-dolichol), yielding GlcNAc-P-P-dolichol embedded in the cytoplasmic leaflet of the endoplasmic reticulum membrane. This is UDP-N-acetylglucosamine--dolichyl-phosphate N-acetylglucosaminephosphotransferase (NAGT) from Leishmania amazonensis.